Reading from the N-terminus, the 369-residue chain is Phenylalanine--tRNA ligase alpha subunit (369 aa).

Residue Glu-269 participates in Mg(2+) binding.

Belongs to the class-II aminoacyl-tRNA synthetase family. Phe-tRNA synthetase alpha subunit type 1 subfamily. As to quaternary structure, tetramer of two alpha and two beta subunits. It depends on Mg(2+) as a cofactor.

The protein localises to the cytoplasm. The enzyme catalyses tRNA(Phe) + L-phenylalanine + ATP = L-phenylalanyl-tRNA(Phe) + AMP + diphosphate + H(+). In Brucella abortus (strain 2308), this protein is Phenylalanine--tRNA ligase alpha subunit.